A 373-amino-acid chain; its full sequence is 3-dehydroquinate synthase (373 aa).

NAD(+) contacts are provided by residues 67-72, 101-105, 125-126, Lys-138, and Lys-147; these read EGEQAK, GVVLD, and TT. 3 residues coordinate Zn(2+): Glu-180, His-240, and His-256.

This sequence belongs to the sugar phosphate cyclases superfamily. Dehydroquinate synthase family. Requires NAD(+) as cofactor. It depends on Co(2+) as a cofactor. Zn(2+) serves as cofactor.

It localises to the cytoplasm. It catalyses the reaction 7-phospho-2-dehydro-3-deoxy-D-arabino-heptonate = 3-dehydroquinate + phosphate. Its pathway is metabolic intermediate biosynthesis; chorismate biosynthesis; chorismate from D-erythrose 4-phosphate and phosphoenolpyruvate: step 2/7. Its function is as follows. Catalyzes the conversion of 3-deoxy-D-arabino-heptulosonate 7-phosphate (DAHP) to dehydroquinate (DHQ). The chain is 3-dehydroquinate synthase (aroB) from Chlamydia muridarum (strain MoPn / Nigg).